The sequence spans 265 residues: Ni-sirohydrochlorin a,c-diamide reductive cyclase complex, component CfbC (265 aa).

The protein belongs to the NifH/BchL/ChlL family. As to quaternary structure, homodimer. The Ni-sirohydrochlorin a,c-diamide reductive cyclase complex is composed of a NifH homolog component CfbC and a NifD homolog component CfbD. [4Fe-4S] cluster is required as a cofactor.

It catalyses the reaction Ni-sirohydrochlorin a,c-diamide + 3 AH2 + ATP + H2O = 15,17(3)-seco-F430-17(3)-acid + 3 A + ADP + phosphate. In terms of biological role, involved in the biosynthesis of the unique nickel-containing tetrapyrrole coenzyme F430, the prosthetic group of methyl-coenzyme M reductase (MCR), which plays a key role in methanogenesis and anaerobic methane oxidation. Catalyzes both the six-electron reduction of the tetrahydroporphyrin ring system and the gamma-lactamization of the c-acetamide side chain of Ni-sirohydrochlorin a,c-diamide to yield 15,17(3)-seco-F430-17(3)-acid (seco-F430), the last intermediate in the biosynthesis of the coenzyme F430. This chain is Ni-sirohydrochlorin a,c-diamide reductive cyclase complex, component CfbC, found in Methanosarcina barkeri (strain Fusaro / DSM 804).